The chain runs to 962 residues: Villin-5 (962 aa).

Gelsolin-like repeat units follow at residues 29–79 (FKPV…DEAG), 150–190 (VRVK…QERA), 262–305 (GQTD…DQRK), 396–453 (LQVW…EDRA), 534–574 (MQAI…EDQE), and 636–677 (LKAT…KKKP). The tract at residues 749-785 (KPKRRVPAYSSRSTVPDKSQPRSRSMTFSPDRARVRG) is disordered. The segment covering 758-776 (SSRSTVPDKSQPRSRSMTF) has biased composition (polar residues). Phosphoserine is present on residues S777 and S787. Low complexity predominate over residues 845–862 (EKPTPTSQEPPTSPSSSE). The disordered stretch occupies residues 845–917 (EKPTPTSQEP…LKTDSEDPVS (73 aa)). The span at 863–875 (ATNQAEAPKSTSE) shows a compositional bias: polar residues. Residue S883 is modified to Phosphoserine. Residues 889–898 (SKEEEAEEES) are compositionally biased toward acidic residues. The region spanning 897–962 (ESSLPTFPYE…NKLKMSVNLF (66 aa)) is the HP domain.

Belongs to the villin/gelsolin family. As to expression, ubiquitous, but expressed preferentially in pollen and stamens.

The protein resides in the cytoplasm. Its subcellular location is the cytoskeleton. Its function is as follows. Major actin filament stabilizing factor and regulator of actin dynamics. Binds actin and actin filament bundles in a Ca(2+)-insensitive manner, but caps the barbed end of actin filaments and is able to sever them in a calcium-dependent manner. Required for the construction of actin collars in pollen tubes. Acts synergistically with VLN2 (AC O81644) to regulate polarized pollen tube growth. In Arabidopsis thaliana (Mouse-ear cress), this protein is Villin-5.